An 86-amino-acid chain; its full sequence is Large ribosomal subunit protein bL27 (86 aa).

Residues 1–24 (MAHKKAGGSSRNGRDSEGRRLGVK) are disordered.

It belongs to the bacterial ribosomal protein bL27 family.

The polypeptide is Large ribosomal subunit protein bL27 (Magnetococcus marinus (strain ATCC BAA-1437 / JCM 17883 / MC-1)).